The primary structure comprises 259 residues: Adenosylcobinamide-GDP ribazoletransferase (259 aa).

Transmembrane regions (helical) follow at residues 43 to 63 (LAGAVITAPAGLLLALMLGLG), 64 to 84 (ASSMVAAFAAIGLQVLLTGAL), 116 to 136 (FGVLALVFGVGLRVAALASLV), 141 to 161 (PINVALVMIGIAAVSRALMVW), and 185 to 205 (TLYTALFLGLAVAVVTIAPVT).

Belongs to the CobS family. It depends on Mg(2+) as a cofactor.

The protein localises to the cell inner membrane. It catalyses the reaction alpha-ribazole + adenosylcob(III)inamide-GDP = adenosylcob(III)alamin + GMP + H(+). The catalysed reaction is alpha-ribazole 5'-phosphate + adenosylcob(III)inamide-GDP = adenosylcob(III)alamin 5'-phosphate + GMP + H(+). Its pathway is cofactor biosynthesis; adenosylcobalamin biosynthesis; adenosylcobalamin from cob(II)yrinate a,c-diamide: step 7/7. In terms of biological role, joins adenosylcobinamide-GDP and alpha-ribazole to generate adenosylcobalamin (Ado-cobalamin). Also synthesizes adenosylcobalamin 5'-phosphate from adenosylcobinamide-GDP and alpha-ribazole 5'-phosphate. In Allorhizobium ampelinum (strain ATCC BAA-846 / DSM 112012 / S4) (Agrobacterium vitis (strain S4)), this protein is Adenosylcobinamide-GDP ribazoletransferase.